Here is a 163-residue protein sequence, read N- to C-terminus: Ribonuclease P protein subunit p25-like protein (163 aa).

Disordered regions lie at residues 1 to 24 (MEQY…LPPD) and 126 to 163 (LDPS…DTRS). Basic residues predominate over residues 153-163 (RPRRRARDTRS).

Belongs to the histone-like Alba family.

The protein resides in the nucleus. Its function is as follows. May be a component of ribonuclease P or MRP. The polypeptide is Ribonuclease P protein subunit p25-like protein (Rpp25l) (Mus musculus (Mouse)).